The chain runs to 366 residues: MKIIRIETSRIAVPLTKPFKTALRTVYTAESVIVRITYDSGAVGWGEAPPTLVITGDSMDSIESAIHHVLKPALLGKSLAGYEAILHDIQHLLTGNMSAKAAVEMALYDGWAQMCGLPLYQMLGGYRDTLETDYTVSVNSPEEMAADAENYLKQGFQTLKIKVGKDDIATDIARIQEIRKRVGSAVKLRLDANQGWRPKEAVTAIRKMEDAGLGIELVEQPVHKDDLAGLKKVTDATDTPIMADESVFTPRQAFEVLQTRSADLINIKLMKAGGISGAEKINAMAEACGVECMVGSMIETKLGITAAAHFAASKRNITRFDFDAPLMLKTDVFNGGITYSGSTISMPGKPGLGIIGAALLKGEKEQ.

Substrate is bound by residues R24, T135, and K160. K162 functions as the Proton acceptor; specific for (R)-substrate epimerization in the catalytic mechanism. Residues D191, E219, and D244 each contribute to the Mg(2+) site. K268 serves as the catalytic Proton acceptor; specific for (S)-substrate epimerization. Substrate is bound by residues S296, I298, D321, and D323.

This sequence belongs to the mandelate racemase/muconate lactonizing enzyme family. As to quaternary structure, homooctamer; tetramer of dimers. Requires Mg(2+) as cofactor.

It carries out the reaction L-alanyl-L-glutamate = L-alanyl-D-glutamate. It participates in cell wall degradation; peptidoglycan degradation. Its function is as follows. Catalyzes the epimerization of L-Ala-D-Glu to L-Ala-L-Glu and has probably a role in the metabolism of the murein peptide, of which L-Ala-D-Glu is a component. Is also able to catalyze the reverse reaction and the epimerization of the other Ala-X dipeptides L-Ala-L-Asp, L-Ala-L-Leu, L-Ala-L-Met, and L-Ala-L-Ser. Is not able to epimerize other L-Ala-X dipeptides. Is also active with L-Ser-L-Glu and, oddly, L-Pro-L-Glu, but not with L-Glu-L-Glu, L-Lys-L-Glu, L-Lys-L-Ala, or D-Ala-D-Ala. This Bacillus subtilis (strain 168) protein is L-Ala-D/L-Glu epimerase (ykfB).